A 280-amino-acid chain; its full sequence is UPF0276 protein CC_2906 (280 aa).

The protein belongs to the UPF0276 family.

The sequence is that of UPF0276 protein CC_2906 from Caulobacter vibrioides (strain ATCC 19089 / CIP 103742 / CB 15) (Caulobacter crescentus).